The primary structure comprises 652 residues: ATP-dependent zinc metalloprotease FtsH 1 (652 aa).

Residues 1–9 lie on the Cytoplasmic side of the membrane; sequence MSDNKWLRN. A helical membrane pass occupies residues 10–30; that stretch reads GFVWMILIIAAIAVWVTFVQG. Topologically, residues 31–110 are extracellular; the sequence is GRGGATITTQ…QTHRASQWGN (80 aa). The helical transmembrane segment at 111–131 threads the bilayer; sequence VLGTLTFLLPTLFLIGVIIFM. Residues 132 to 652 lie on the Cytoplasmic side of the membrane; that stretch reads MRQAQGTNNQ…VPHIKPQPAS (521 aa). 203–210 contributes to the ATP binding site; that stretch reads GPPGTGKT. H425 lines the Zn(2+) pocket. Residue E426 is part of the active site. 2 residues coordinate Zn(2+): H429 and D501. The segment at 623-652 is disordered; the sequence is IATPETARPDSPSEARPAAPVPHIKPQPAS. The span at 641-652 shows a compositional bias: pro residues; it reads APVPHIKPQPAS.

It in the central section; belongs to the AAA ATPase family. The protein in the C-terminal section; belongs to the peptidase M41 family. Homohexamer. The cofactor is Zn(2+).

It localises to the cell membrane. In terms of biological role, acts as a processive, ATP-dependent zinc metallopeptidase for both cytoplasmic and membrane proteins. Plays a role in the quality control of integral membrane proteins. The polypeptide is ATP-dependent zinc metalloprotease FtsH 1 (Thermomicrobium roseum (strain ATCC 27502 / DSM 5159 / P-2)).